A 197-amino-acid chain; its full sequence is Cytochrome c-L (197 aa).

An N-terminal signal peptide occupies residues 1–25 (MMNRVKIGTALLGLTLAGIALPALA). Cysteine 90, cysteine 93, and histidine 94 together coordinate heme c.

Binds 1 heme c group covalently per subunit.

The protein localises to the periplasm. Its function is as follows. Electron acceptor for MDH. Acts in methanol oxidation. The protein is Cytochrome c-L (moxG) of Methylorubrum extorquens (strain ATCC 14718 / DSM 1338 / JCM 2805 / NCIMB 9133 / AM1) (Methylobacterium extorquens).